We begin with the raw amino-acid sequence, 388 residues long: Processive diacylglycerol beta-glucosyltransferase (388 aa).

Belongs to the glycosyltransferase 28 family. UgtP subfamily.

The protein resides in the cell membrane. It carries out the reaction a 1,2-diacyl-3-O-(beta-D-glucopyranosyl)-sn-glycerol + UDP-alpha-D-glucose = a 1,2-diacyl-3-O-(beta-D-Glc-(1-&gt;6)-beta-D-Glc)-sn-glycerol + UDP + H(+). The enzyme catalyses a 1,2-diacyl-3-O-(beta-D-Glc-(1-&gt;6)-beta-D-Glc)-sn-glycerol + UDP-alpha-D-glucose = a 1,2-diacyl-3-O-(beta-D-Glc-(1-&gt;6)-beta-D-Glc-(1-&gt;6)-beta-D-Glc)-sn-glycerol + UDP + H(+). The catalysed reaction is a 1,2-diacyl-sn-glycerol + UDP-alpha-D-glucose = a 1,2-diacyl-3-O-(beta-D-glucopyranosyl)-sn-glycerol + UDP + H(+). The protein operates within glycolipid metabolism; diglucosyl-diacylglycerol biosynthesis. Its function is as follows. Processive glucosyltransferase involved in the biosynthesis of both the bilayer- and non-bilayer-forming membrane glucolipids. Is able to successively transfer up to three glucosyl residues to diacylglycerol (DAG), thereby catalyzing the formation of beta-monoglucosyl-DAG (3-O-(beta-D-glucopyranosyl)-1,2-diacyl-sn-glycerol), beta-diglucosyl-DAG (3-O-(beta-D-glucopyranosyl-beta-(1-&gt;6)-D-glucopyranosyl)-1,2-diacyl-sn-glycerol) and beta-triglucosyl-DAG (3-O-(beta-D-glucopyranosyl-beta-(1-&gt;6)-D-glucopyranosyl-beta-(1-&gt;6)-D-glucopyranosyl)-1,2-diacyl-sn-glycerol). Beta-diglucosyl-DAG is the predominant glycolipid found in Bacillales and is also used as a membrane anchor for lipoteichoic acid (LTA). The sequence is that of Processive diacylglycerol beta-glucosyltransferase from Bacillus cereus (strain ATCC 10987 / NRS 248).